A 314-amino-acid chain; its full sequence is DNA-directed RNA polymerase subunit alpha (314 aa).

Residues 1 to 228 (MAQFHYECVE…SLFEPLKDIT (228 aa)) are alpha N-terminal domain (alpha-NTD). The alpha C-terminal domain (alpha-CTD) stretch occupies residues 240-314 (DPTSQIPIEE…LPQEKVAKAT (75 aa)).

The protein belongs to the RNA polymerase alpha chain family. In terms of assembly, in cyanobacteria the RNAP catalytic core is composed of 2 alpha, 1 beta, 1 beta', 1 gamma and 1 omega subunit. When a sigma factor is associated with the core the holoenzyme is formed, which can initiate transcription.

It carries out the reaction RNA(n) + a ribonucleoside 5'-triphosphate = RNA(n+1) + diphosphate. DNA-dependent RNA polymerase catalyzes the transcription of DNA into RNA using the four ribonucleoside triphosphates as substrates. The protein is DNA-directed RNA polymerase subunit alpha of Trichodesmium erythraeum (strain IMS101).